Consider the following 304-residue polypeptide: Putative S-adenosyl-L-methionine-dependent methyltransferase YktD (304 aa).

Residues aspartate 134 and 163 to 164 each bind S-adenosyl-L-methionine; that span reads DF.

The protein belongs to the UPF0677 family.

In terms of biological role, may be involved in polyketide synthesis. The protein is Putative S-adenosyl-L-methionine-dependent methyltransferase YktD (yktD) of Bacillus subtilis (strain 168).